The primary structure comprises 299 residues: Putative transposase InsZ (299 aa).

The span at 276–291 shows a compositional bias: basic residues; it reads PSRPRSVKISKTRYPV. The disordered stretch occupies residues 276–299; the sequence is PSRPRSVKISKTRYPVKHSAAPLK.

The polypeptide is Putative transposase InsZ (insZ) (Escherichia coli (strain K12)).